Here is a 116-residue protein sequence, read N- to C-terminus: Phosphoribosyl-AMP cyclohydrolase (116 aa).

D78 is a Mg(2+) binding site. Residue C79 participates in Zn(2+) binding. Residues D80 and D82 each coordinate Mg(2+). C95 and C102 together coordinate Zn(2+).

It belongs to the PRA-CH family. In terms of assembly, homodimer. It depends on Mg(2+) as a cofactor. Zn(2+) serves as cofactor.

The protein resides in the cytoplasm. It carries out the reaction 1-(5-phospho-beta-D-ribosyl)-5'-AMP + H2O = 1-(5-phospho-beta-D-ribosyl)-5-[(5-phospho-beta-D-ribosylamino)methylideneamino]imidazole-4-carboxamide. Its pathway is amino-acid biosynthesis; L-histidine biosynthesis; L-histidine from 5-phospho-alpha-D-ribose 1-diphosphate: step 3/9. In terms of biological role, catalyzes the hydrolysis of the adenine ring of phosphoribosyl-AMP. This is Phosphoribosyl-AMP cyclohydrolase from Acidiphilium cryptum (strain JF-5).